Here is a 451-residue protein sequence, read N- to C-terminus: Threonylcarbamoyladenosine tRNA methylthiotransferase MtaB (451 aa).

The MTTase N-terminal domain maps to 2 to 114; it reads ATVAFHTLGC…MLGYIDQYRE (113 aa). [4Fe-4S] cluster-binding residues include C11, C47, C78, C153, C157, and C160. One can recognise a Radical SAM core domain in the interval 139–369; sequence FTDRTRASLK…IALSDQLAKE (231 aa). Residues 372–437 enclose the TRAM domain; it reads SQYENEVLEI…YPYNEGQFVR (66 aa).

The protein belongs to the methylthiotransferase family. MtaB subfamily. The cofactor is [4Fe-4S] cluster.

It localises to the cytoplasm. It catalyses the reaction N(6)-L-threonylcarbamoyladenosine(37) in tRNA + (sulfur carrier)-SH + AH2 + 2 S-adenosyl-L-methionine = 2-methylsulfanyl-N(6)-L-threonylcarbamoyladenosine(37) in tRNA + (sulfur carrier)-H + 5'-deoxyadenosine + L-methionine + A + S-adenosyl-L-homocysteine + 2 H(+). Functionally, catalyzes the methylthiolation of N6-threonylcarbamoyladenosine (t(6)A), leading to the formation of 2-methylthio-N6-threonylcarbamoyladenosine (ms(2)t(6)A) at position 37 in tRNAs that read codons beginning with adenine. In Bacillus subtilis (strain 168), this protein is Threonylcarbamoyladenosine tRNA methylthiotransferase MtaB (mtaB).